The primary structure comprises 101 residues: Phosphoprotein OPG062 (101 aa).

Residues 48-76 (VDKPSSPASERRPSSPSRCERMNNPGKQV) form a disordered region. Phosphoserine occurs at positions 53 and 62. The segment covering 56–68 (SERRPSSPSRCER) has biased composition (basic and acidic residues).

This sequence belongs to the orthopoxvirus OPG062 family. In terms of assembly, self-associates to form high molecular-weight forms. Interacts with protein OPG157. Interacts with host RICTOR and RPTOR; these interactions disrupt the mTORC1 and mTORC2 crosstalk. Post-translationally, phosphorylated on two serines. While these phosphorylations do not play a role in virion assembly; they are essential for the interaction with host RICTOR and RPTOR.

The protein resides in the virion. Plays an essential role in virion assembly and morphogenesis. Also plays a role in the inhibition of host immune response by dysregulating mTOR. Sequesters host RICTOR and RPTOR, thereby disrupting mTORC1 and mTORC2 crosstalk. In turn, blocks the host antiviral response in part through mTOR-dependent degradation of cGAS, the primary poxvirus sensor. In Variola virus (isolate Human/India/Ind3/1967) (VARV), this protein is Phosphoprotein OPG062 (OPG062).